The sequence spans 207 residues: V-type ATP synthase subunit D (207 aa).

Belongs to the V-ATPase D subunit family.

Functionally, produces ATP from ADP in the presence of a proton gradient across the membrane. The sequence is that of V-type ATP synthase subunit D from Streptococcus gordonii (strain Challis / ATCC 35105 / BCRC 15272 / CH1 / DL1 / V288).